Consider the following 126-residue polypeptide: Large ribosomal subunit protein bL12 (126 aa).

The protein belongs to the bacterial ribosomal protein bL12 family. As to quaternary structure, homodimer. Part of the ribosomal stalk of the 50S ribosomal subunit. Forms a multimeric L10(L12)X complex, where L10 forms an elongated spine to which 2 to 4 L12 dimers bind in a sequential fashion. Binds GTP-bound translation factors.

In terms of biological role, forms part of the ribosomal stalk which helps the ribosome interact with GTP-bound translation factors. Is thus essential for accurate translation. The protein is Large ribosomal subunit protein bL12 of Desulfatibacillum aliphaticivorans.